A 240-amino-acid chain; its full sequence is Phosphoribosylaminoimidazole-succinocarboxamide synthase (240 aa).

It belongs to the SAICAR synthetase family.

The catalysed reaction is 5-amino-1-(5-phospho-D-ribosyl)imidazole-4-carboxylate + L-aspartate + ATP = (2S)-2-[5-amino-1-(5-phospho-beta-D-ribosyl)imidazole-4-carboxamido]succinate + ADP + phosphate + 2 H(+). It participates in purine metabolism; IMP biosynthesis via de novo pathway; 5-amino-1-(5-phospho-D-ribosyl)imidazole-4-carboxamide from 5-amino-1-(5-phospho-D-ribosyl)imidazole-4-carboxylate: step 1/2. This Pyrobaculum calidifontis (strain DSM 21063 / JCM 11548 / VA1) protein is Phosphoribosylaminoimidazole-succinocarboxamide synthase.